We begin with the raw amino-acid sequence, 195 residues long: Flavin-dependent monooxygenase, reductase subunit HsaB (195 aa).

Residues 42–46 (PVGFA), 48–49 (QS), 63–65 (CPT), 69–70 (RS), and 95–96 (RF) contribute to the FAD site. NAD(+) is bound at residue 160–163 (FYRG).

Belongs to the non-flavoprotein flavin reductase family. HsaAB monooxygenase consists of an oxygenase component HsaA and a reductase component HsaB.

The enzyme catalyses a reduced flavin + NAD(+) = an oxidized flavin + NADH + 2 H(+). It functions in the pathway lipid metabolism; steroid biosynthesis. In terms of biological role, catalyzes the reduction of free flavins (FMN or FAD) by NADH. Subsequently, the reduced flavins diffuse to the HsaA oxygenase subunit. The chain is Flavin-dependent monooxygenase, reductase subunit HsaB (hsaB) from Rhodococcus jostii (strain RHA1).